A 127-amino-acid polypeptide reads, in one-letter code: Cytochrome c2 (127 aa).

Residues 1–20 form the signal peptide; the sequence is MRKLVFGLFVLAASVAPAAA. A Pyrrolidone carboxylic acid modification is found at Gln-21. Heme c contacts are provided by Cys-33, Cys-36, His-37, and Met-99.

The protein belongs to the cytochrome c family. In terms of processing, binds 1 heme c group covalently per subunit.

Cytochrome c2 is found mainly in purple, non-sulfur, photosynthetic bacteria where it functions as the electron donor to the oxidized bacteriochlorophyll in the photophosphorylation pathway. However, it may also have a role in the respiratory chain and is found in some non-photosynthetic bacteria. In Blastochloris viridis (Rhodopseudomonas viridis), this protein is Cytochrome c2 (cycA).